The following is a 340-amino-acid chain: N-acetyl-gamma-glutamyl-phosphate reductase (340 aa).

The active site involves C151.

It belongs to the NAGSA dehydrogenase family. Type 1 subfamily.

It is found in the cytoplasm. It carries out the reaction N-acetyl-L-glutamate 5-semialdehyde + phosphate + NADP(+) = N-acetyl-L-glutamyl 5-phosphate + NADPH + H(+). The protein operates within amino-acid biosynthesis; L-arginine biosynthesis; N(2)-acetyl-L-ornithine from L-glutamate: step 3/4. Functionally, catalyzes the NADPH-dependent reduction of N-acetyl-5-glutamyl phosphate to yield N-acetyl-L-glutamate 5-semialdehyde. This Aquifex aeolicus (strain VF5) protein is N-acetyl-gamma-glutamyl-phosphate reductase.